The following is a 471-amino-acid chain: Putative multidrug resistance protein MdtD (471 aa).

Transmembrane regions (helical) follow at residues 12 to 32 (LWIV…VNTA), 49 to 69 (MIIV…GWLA), 77 to 97 (IFFT…QAST), 106 to 126 (VLQG…VMKI), 138 to 158 (FVTL…GVLV), 165 to 185 (WIFL…LCLM), 195 to 215 (FDLS…LALD), 220 to 240 (LGIS…ALLL), 263 to 283 (FSLG…LPFM), 286 to 306 (VFLQ…MIPM), 342 to 362 (LLFM…VLFL), 393 to 413 (LLSM…GLLL), and 431 to 451 (VFLY…LIFS).

The protein belongs to the major facilitator superfamily. TCR/Tet family.

Its subcellular location is the cell inner membrane. The protein is Putative multidrug resistance protein MdtD of Klebsiella pneumoniae (strain 342).